We begin with the raw amino-acid sequence, 296 residues long: Ribosomal protein L11 methyltransferase (296 aa).

Residues Thr145, Gly166, Asp188, and Asn230 each coordinate S-adenosyl-L-methionine.

The protein belongs to the methyltransferase superfamily. PrmA family.

Its subcellular location is the cytoplasm. The catalysed reaction is L-lysyl-[protein] + 3 S-adenosyl-L-methionine = N(6),N(6),N(6)-trimethyl-L-lysyl-[protein] + 3 S-adenosyl-L-homocysteine + 3 H(+). Its function is as follows. Methylates ribosomal protein L11. The sequence is that of Ribosomal protein L11 methyltransferase from Histophilus somni (strain 129Pt) (Haemophilus somnus).